The primary structure comprises 259 residues: 3-deoxy-manno-octulosonate cytidylyltransferase (259 aa).

It belongs to the KdsB family.

It localises to the cytoplasm. The enzyme catalyses 3-deoxy-alpha-D-manno-oct-2-ulosonate + CTP = CMP-3-deoxy-beta-D-manno-octulosonate + diphosphate. It participates in nucleotide-sugar biosynthesis; CMP-3-deoxy-D-manno-octulosonate biosynthesis; CMP-3-deoxy-D-manno-octulosonate from 3-deoxy-D-manno-octulosonate and CTP: step 1/1. It functions in the pathway bacterial outer membrane biogenesis; lipopolysaccharide biosynthesis. In terms of biological role, activates KDO (a required 8-carbon sugar) for incorporation into bacterial lipopolysaccharide in Gram-negative bacteria. In Nitrosococcus oceani (strain ATCC 19707 / BCRC 17464 / JCM 30415 / NCIMB 11848 / C-107), this protein is 3-deoxy-manno-octulosonate cytidylyltransferase.